The sequence spans 508 residues: Steroid 17-alpha-hydroxylase/17,20 lyase (508 aa).

N202 is a substrate binding site. C442 contributes to the heme binding site.

This sequence belongs to the cytochrome P450 family. Heme serves as cofactor.

The protein localises to the endoplasmic reticulum membrane. It localises to the microsome membrane. The catalysed reaction is a C21-steroid + reduced [NADPH--hemoprotein reductase] + O2 = a 17alpha-hydroxy-C21-steroid + oxidized [NADPH--hemoprotein reductase] + H2O + H(+). The enzyme catalyses progesterone + reduced [NADPH--hemoprotein reductase] + O2 = 17alpha-hydroxyprogesterone + oxidized [NADPH--hemoprotein reductase] + H2O + H(+). It catalyses the reaction pregnenolone + reduced [NADPH--hemoprotein reductase] + O2 = 17alpha-hydroxypregnenolone + oxidized [NADPH--hemoprotein reductase] + H2O + H(+). It carries out the reaction 17alpha-hydroxyprogesterone + reduced [NADPH--hemoprotein reductase] + O2 = androst-4-ene-3,17-dione + acetate + oxidized [NADPH--hemoprotein reductase] + H2O + 2 H(+). The catalysed reaction is 17alpha-hydroxyprogesterone + reduced [NADPH--hemoprotein reductase] + O2 = 16alpha,17alpha-dihydroxyprogesterone + oxidized [NADPH--hemoprotein reductase] + H2O + H(+). The enzyme catalyses 16alpha,17alpha-dihydroxyprogesterone + reduced [NADPH--hemoprotein reductase] + O2 = 6beta,16alpha,17alpha-trihydroxyprogesterone + oxidized [NADPH--hemoprotein reductase] + H2O + H(+). It catalyses the reaction 17alpha-hydroxypregnenolone + reduced [NADPH--hemoprotein reductase] + O2 = 3beta-hydroxyandrost-5-en-17-one + acetate + oxidized [NADPH--hemoprotein reductase] + H2O + 2 H(+). It carries out the reaction 16alpha,17alpha-dihydroxypregnenolone + reduced [NADPH--hemoprotein reductase] + O2 = 3beta,16alpha-dihydroxy-androst-5-en-17-one + acetate + oxidized [NADPH--hemoprotein reductase] + H2O + 2 H(+). The catalysed reaction is 3beta-hydroxyandrost-5-en-17-one + reduced [NADPH--hemoprotein reductase] + O2 = 3beta,16alpha-dihydroxy-androst-5-en-17-one + oxidized [NADPH--hemoprotein reductase] + H2O + H(+). The enzyme catalyses androst-4-ene-3,17-dione + reduced [NADPH--hemoprotein reductase] + O2 = 16alpha-hydroxyandrost-4-ene-3,17-dione + oxidized [NADPH--hemoprotein reductase] + H2O + H(+). It functions in the pathway steroid hormone biosynthesis. It participates in steroid biosynthesis; glucocorticoid biosynthesis. Its activity is regulated as follows. Regulated predominantly by intracellular cAMP levels. The 17,20-lyase activity is stimulated by cytochrome b5, which acts as an allosteric effector increasing the Vmax of the lyase activity. Its function is as follows. A cytochrome P450 monooxygenase involved in corticoid and androgen biosynthesis. Catalyzes 17-alpha hydroxylation of C21 steroids, which is common for both pathways. A second oxidative step, required only for androgen synthesis, involves an acyl-carbon cleavage. The 17-alpha hydroxy intermediates, as part of adrenal glucocorticoids biosynthesis pathway, are precursors of cortisol. Hydroxylates steroid hormones, pregnenolone and progesterone to form 17-alpha hydroxy metabolites, followed by the cleavage of the C17-C20 bond to form C19 steroids, dehydroepiandrosterone (DHEA) and androstenedione. Has 16-alpha hydroxylase activity. Catalyzes 16-alpha hydroxylation of 17-alpha hydroxy pregnenolone, followed by the cleavage of the C17-C20 bond to form 16-alpha-hydroxy DHEA. Also 16-alpha hydroxylates androgens, relevant for estriol synthesis. Mechanistically, uses molecular oxygen inserting one oxygen atom into a substrate, and reducing the second into a water molecule, with two electrons provided by NADPH via cytochrome P450 reductase (CPR; NADPH-ferrihemoprotein reductase). The chain is Steroid 17-alpha-hydroxylase/17,20 lyase (CYP17A1) from Felis catus (Cat).